The primary structure comprises 181 residues: Malignant T-cell-amplified sequence 1-A (181 aa).

Residues 92–171 (LPHQQVDKGA…IGIENIHYLN (80 aa)) enclose the PUA domain.

It belongs to the MCTS1 family.

It is found in the cytoplasm. Functionally, plays a role as translation enhancer and involved in cell cycle regulation. In Xenopus laevis (African clawed frog), this protein is Malignant T-cell-amplified sequence 1-A (mcts1-a).